Here is a 224-residue protein sequence, read N- to C-terminus: Ribonuclease T (224 aa).

An Exonuclease domain is found at 20–195 (VVIDVETAGF…YDTQKTAELF (176 aa)). The Mg(2+) site is built by Asp23, Glu25, His182, and Asp187. The active-site Proton donor/acceptor is the His182.

Belongs to the RNase T family. In terms of assembly, homodimer. It depends on Mg(2+) as a cofactor.

Trims short 3' overhangs of a variety of RNA species, leaving a one or two nucleotide 3' overhang. Responsible for the end-turnover of tRNA: specifically removes the terminal AMP residue from uncharged tRNA (tRNA-C-C-A). Also appears to be involved in tRNA biosynthesis. The sequence is that of Ribonuclease T from Vibrio cholerae serotype O1 (strain ATCC 39315 / El Tor Inaba N16961).